The sequence spans 388 residues: 3-amino-5-hydroxybenzoate synthase (388 aa).

Position 188 is an N6-(pyridoxal phosphate)lysine (Lys188).

It belongs to the degT/dnrJ/eryC1 family. In terms of assembly, homodimer. Can interact with RifL. Requires pyridoxal 5'-phosphate as cofactor.

The enzyme catalyses 5-deoxy-5-amino-3-dehydroshikimate = 3-amino-5-hydroxybenzoate + H2O + H(+). It carries out the reaction UDP-3-oxo-alpha-D-glucose + L-glutamine = UDP-alpha-D-kanosamine + 2-oxoglutaramate. It functions in the pathway antibiotic biosynthesis; rifamycin B biosynthesis. AHBA synthase activity is activated by 3-deoxy-D-arabinoheptulosonic acid 7-phosphate (DAHP), an intermediate in the shikimate pathway, and is irreversibly inhibited by gabaculine (5-amino-1,3-cyclohexadiene-1-carboxylate). Catalyzes the dehydration and aromatization of 5-amino-5-deoxy-3-dehydroshikimate (aminoDHS) to 3-amino-5-hydroxybenzoate (AHBA), a compound that then serves as the starter unit for the assembly of a polyketide during the biosynthesis of rifamycin B and other ansamycin antibiotics. Cannot utilize 5-deoxy-5-amino-3-dehydroquinate (aminoDHQ), 5-deoxy-5-aminoshikimate (aminoSA), quinate, 3-dehydroquinate, or 3-dehydroshikimate (DHS) as substrate. In terms of biological role, in a complex with RifL, RifK may have a second function in the AHBA pathway, acting as a transaminase introducing the nitrogen into the first pathway intermediate, UDP-3-keto-D-glucose, to give UDP-kanosamine. Appears to use glutamine as the nitrogen donor; NH(4)(+) or asparagine are 30% less effective as nitrogen donors and neither glutamate nor aspartate show activity. This chain is 3-amino-5-hydroxybenzoate synthase (rifK), found in Amycolatopsis mediterranei (strain S699) (Nocardia mediterranei).